Consider the following 520-residue polypeptide: 2-isopropylmalate synthase (520 aa).

The Pyruvate carboxyltransferase domain maps to 12–274 (IRIFDTTLRD…DSAINTPRIV (263 aa)). Residues aspartate 21, histidine 209, histidine 211, and asparagine 245 each contribute to the Mn(2+) site. The tract at residues 396–520 (RLASMTISDV…VVAGKTAAVA (125 aa)) is regulatory domain.

Belongs to the alpha-IPM synthase/homocitrate synthase family. LeuA type 1 subfamily. As to quaternary structure, homodimer. The cofactor is Mn(2+).

The protein localises to the cytoplasm. It carries out the reaction 3-methyl-2-oxobutanoate + acetyl-CoA + H2O = (2S)-2-isopropylmalate + CoA + H(+). Its pathway is amino-acid biosynthesis; L-leucine biosynthesis; L-leucine from 3-methyl-2-oxobutanoate: step 1/4. In terms of biological role, catalyzes the condensation of the acetyl group of acetyl-CoA with 3-methyl-2-oxobutanoate (2-ketoisovalerate) to form 3-carboxy-3-hydroxy-4-methylpentanoate (2-isopropylmalate). In Xanthomonas axonopodis pv. citri (strain 306), this protein is 2-isopropylmalate synthase.